The sequence spans 223 residues: Serum amyloid P-component (223 aa).

Residues 1–19 form the signal peptide; the sequence is MNKPLLWISVLTSLLEAFA. Positions 24–223 constitute a Pentraxin (PTX) domain; that stretch reads SGKVFVFPRE…YVIIKPLVWV (200 aa). Residue Asn51 is glycosylated (N-linked (GlcNAc...) asparagine). A disulfide bridge links Cys55 with Cys114. Residues Asp77, Asn78, Glu155, Gln156, Asp157, and Gln167 each contribute to the Ca(2+) site.

Belongs to the pentraxin family. Homopentamer. Pentraxin (or pentaxin) have a discoid arrangement of 5 non-covalently bound subunits. Ca(2+) is required as a cofactor. In terms of processing, N-glycosylated with a complex biantennary oligosaccharide chain with a sialic acid at the end (disialo-SAP). Monosialo-SAP as well as asioalo-SAP are also detected. Found in serum and urine.

The protein resides in the secreted. In terms of biological role, can interact with DNA and histones and may scavenge nuclear material released from damaged circulating cells. May also function as a calcium-dependent lectin. This Homo sapiens (Human) protein is Serum amyloid P-component (APCS).